The chain runs to 259 residues: Ribonuclease PH (259 aa).

Phosphate is bound by residues R88 and 126–128 (GTR).

Belongs to the RNase PH family. Homohexameric ring arranged as a trimer of dimers.

The enzyme catalyses tRNA(n+1) + phosphate = tRNA(n) + a ribonucleoside 5'-diphosphate. Phosphorolytic 3'-5' exoribonuclease that plays an important role in tRNA 3'-end maturation. Removes nucleotide residues following the 3'-CCA terminus of tRNAs; can also add nucleotides to the ends of RNA molecules by using nucleoside diphosphates as substrates, but this may not be physiologically important. Probably plays a role in initiation of 16S rRNA degradation (leading to ribosome degradation) during starvation. This chain is Ribonuclease PH, found in Mycobacterium leprae (strain Br4923).